We begin with the raw amino-acid sequence, 213 residues long: 3-demethoxyubiquinol 3-hydroxylase (213 aa).

Residues E62, E92, H95, E144, E176, and H179 each coordinate Fe cation.

This sequence belongs to the COQ7 family. Requires Fe cation as cofactor.

The protein resides in the cell membrane. It carries out the reaction a 5-methoxy-2-methyl-3-(all-trans-polyprenyl)benzene-1,4-diol + AH2 + O2 = a 3-demethylubiquinol + A + H2O. Its pathway is cofactor biosynthesis; ubiquinone biosynthesis. Its function is as follows. Catalyzes the hydroxylation of 2-nonaprenyl-3-methyl-6-methoxy-1,4-benzoquinol during ubiquinone biosynthesis. In Legionella pneumophila subsp. pneumophila (strain Philadelphia 1 / ATCC 33152 / DSM 7513), this protein is 3-demethoxyubiquinol 3-hydroxylase.